The following is a 195-amino-acid chain: Early light-induced protein 1, chloroplastic (195 aa).

Residues methionine 1–methionine 46 constitute a chloroplast transit peptide. Residues methionine 46 to lysine 81 form a disordered region. Residues serine 56–leucine 68 are compositionally biased toward low complexity. Pro residues predominate over residues proline 69–lysine 79. The next 3 helical transmembrane spans lie at leucine 104–leucine 124, glycine 131–phenylalanine 151, and phenylalanine 175–valine 195.

This sequence belongs to the ELIP/psbS family.

The protein localises to the plastid. The protein resides in the chloroplast thylakoid membrane. Functionally, prevents excess accumulation of free chlorophyll by inhibiting the entire chlorophyll biosynthesis pathway (e.g. 5-aminolevulinate synthesis and Mg-protoporphyrin IX chelatase activity), and hence prevent photooxidative stress. Probably involved in the integration of pigments into the mature light-harvesting pigment-protein complexes. Light-harvesting chlorophyll (LHC) a/b-binding protein required to ensure a high rate of chlorophyll accumulation during deetiolation in continuous high light. Involved in seed germination. May fulfill a photoprotective functions. This is Early light-induced protein 1, chloroplastic from Arabidopsis thaliana (Mouse-ear cress).